Consider the following 329-residue polypeptide: Taste receptor type 2 member 134 (329 aa).

Over 1 to 27 the chain is Extracellular; sequence MRCSLRGCVQGRGGKSGVSLSKFSPKK. Residues 28–48 traverse the membrane as a helical segment; it reads MSFFFIFMVIFCIQSLVALLQ. Residues 49–68 are Cytoplasmic-facing; that stretch reads NGFLATVLGREWVRSQGLPA. Residues 69-89 form a helical membrane-spanning segment; the sequence is GDMIVACLAASRFCLHGVAIV. Topologically, residues 90–121 are extracellular; that stretch reads NNFLTFVKLWSQKIYFSVLWDFVNTVNFWCTT. The chain crosses the membrane as a helical span at residues 122–142; sequence WLAIFYCVKISSFSHPIFFWI. At 143-153 the chain is on the cytoplasmic side; the sequence is KWRISRSVPRL. The chain crosses the membrane as a helical span at residues 154 to 174; that stretch reads LLGSLVIGGLSAVSSATGNTI. The Extracellular portion of the chain corresponds to 175–201; it reads AFQMTACENYTLAYRTRAFYAYYFRCH. Asn-183 is a glycosylation site (N-linked (GlcNAc...) asparagine). A helical membrane pass occupies residues 202–222; it reads AMLMWIIPFFLFLLSVILLMF. At 223-251 the chain is on the cytoplasmic side; sequence SLYRHLEHMRYRRPWSHDYSTQAHTMALK. A helical transmembrane segment spans residues 252–272; it reads SLAFFLVFYTSYVLFLVISVT. Over 273 to 282 the chain is Extracellular; it reads RVVNVHSSWH. Residues 283-303 form a helical membrane-spanning segment; the sequence is WAWEVITYMGILLHSTILTLS. The Cytoplasmic segment spans residues 304–329; that stretch reads NPKMRKALKIKFPDLCVARSQDKRRG.

The protein belongs to the G-protein coupled receptor T2R family. As to expression, expressed in tongue and gastrointestinal tract.

Its subcellular location is the membrane. Its function is as follows. Putative taste receptor which may play a role in the perception of bitterness. The polypeptide is Taste receptor type 2 member 134 (Rattus norvegicus (Rat)).